The primary structure comprises 191 residues: Inosine triphosphate pyrophosphatase (191 aa).

15 to 20 serves as a coordination point for ITP; the sequence is TGNANK. E43 is a Mg(2+) binding site. Residues K55, 71–72, K88, 147–150, K168, and 173–174 contribute to the ITP site; these read DT, FGWD, and HR.

The protein belongs to the HAM1 NTPase family. Homodimer. Mg(2+) is required as a cofactor. The cofactor is Mn(2+).

Its subcellular location is the cytoplasm. It is found in the nucleus. The enzyme catalyses ITP + H2O = IMP + diphosphate + H(+). It catalyses the reaction dITP + H2O = dIMP + diphosphate + H(+). The catalysed reaction is XTP + H2O = XMP + diphosphate + H(+). In terms of biological role, pyrophosphatase that hydrolyzes non-canonical purine nucleotides such as inosine triphosphate (ITP), deoxyinosine triphosphate (dITP) or xanthosine 5'-triphosphate (XTP) to their respective monophosphate derivatives. The enzyme does not distinguish between the deoxy- and ribose forms. Probably excludes non-canonical purines from RNA and DNA precursor pools, thus preventing their incorporation into RNA and DNA and avoiding chromosomal lesions. The polypeptide is Inosine triphosphate pyrophosphatase (Neurospora crassa (strain ATCC 24698 / 74-OR23-1A / CBS 708.71 / DSM 1257 / FGSC 987)).